The sequence spans 640 residues: Auxin efflux carrier component 3 (640 aa).

The Extracellular segment spans residues 1 to 7 (MISWHDL). Residues 8 to 28 (YTVLTAVIPLYVAMILAYGSV) form a helical membrane-spanning segment. Residues 29-38 (RWWKIFSPDQ) are Cytoplasmic-facing. Residues 39 to 59 (CSGINRFVAIFAVPLLSFHFI) traverse the membrane as a helical segment. (indol-3-yl)acetate is bound at residue Val-51. Over 60-71 (STNNPYAMNLRF) the chain is Extracellular. Residues 72-92 (IAADTLQKIIMLSLLVLWANF) traverse the membrane as a helical segment. Residues 93 to 101 (TRSGSLEWS) are Cytoplasmic-facing. The chain crosses the membrane as a helical span at residues 102–122 (ITIFSLSTLPNTLVMGIPLLI). Positions 112 and 114 each coordinate (indol-3-yl)acetate. Over 123-131 (AMYGEYSGS) the chain is Extracellular. A helical transmembrane segment spans residues 132–152 (LMVQIVVLQCIIWYTLLLFLF). Residue Tyr-145 coordinates (indol-3-yl)acetate. At 153–500 (EFRGAKMLIM…LIRNPNTYSS (348 aa)) the chain is on the cytoplasmic side. 3 positions are modified to phosphoserine: Ser-226, Ser-243, and Ser-283. The segment at 310-351 (APNPEFSSTTTSTANKSVNKNPKDVNTNQQTTLPTGGKSNSH) is disordered. Over residues 314–348 (EFSSTTTSTANKSVNKNPKDVNTNQQTTLPTGGKS) the composition is skewed to polar residues. Thr-322 carries the post-translational modification Phosphothreonine. The residue at position 366 (Ser-366) is a Phosphoserine. Disordered stretches follow at residues 372 to 391 (AGLN…RSDQ) and 404 to 471 (SHNG…SQRK). The span at 430–442 (GKEEEAERPKDAE) shows a compositional bias: basic and acidic residues. Residues 449 to 460 (APNSTAALQSKT) show a composition bias toward polar residues. A helical transmembrane segment spans residues 501-521 (LIGLIWALVAFRWHVAMPKII). The Extracellular segment spans residues 522–524 (QQS). The helical transmembrane segment at 525-545 (ISILSDAGLGMAMFSLGLFMA) threads the bilayer. At 546 to 559 (LQPKLIACGNSVAT) the chain is on the cytoplasmic side. The chain crosses the membrane as a helical span at residues 560–580 (FAMAVRFLTGPAVMAVAAIAI). The Extracellular portion of the chain corresponds to 581–585 (GLRGD). The helical transmembrane segment at 586–606 (LLRVAIVQAALPQGIVPFVFA) threads the bilayer. Residues Ile-600 and Val-601 each coordinate (indol-3-yl)acetate. The Cytoplasmic portion of the chain corresponds to 607-619 (KEYNVHPAILSTG). A helical membrane pass occupies residues 620–640 (VIFGMLIALPITLVYYILLGL).

The protein belongs to the auxin efflux carrier (TC 2.A.69.1) family. Homodimer. As to expression, predominantly expressed at the lateral side of shoot endodermis cells as well as root pericycle and columella cells.

The protein localises to the cell membrane. Auxin efflux carrier activity is competitively inhibited by naptalamate (N-1-naphthylphthalamic acid, NPA). Functionally, acts as a component of the auxin efflux carrier; this activity is enhanced when activated by PID-mediated phosphorylation. Seems to be involved in the lateral auxin transport system. Together with PIN4 and PIN7, involved in the connective auxin transport (CAT) that ensures communication across the shoot system, and modulates strigolactone-mediated shoot branching control. Binds auxins including indole-3-acetic acid (IAA). Coordinated polar localization of PIN3 is directly regulated by the vesicle trafficking process. The chain is Auxin efflux carrier component 3 from Arabidopsis thaliana (Mouse-ear cress).